The sequence spans 555 residues: Potassium-transporting ATPase potassium-binding subunit (555 aa).

10 consecutive transmembrane segments (helical) span residues 2–22 (IWVA…PTGI), 60–80 (QYAL…YFVF), 130–150 (IGIT…VMAF), 173–193 (VFLP…VPQT), 246–266 (MSNI…PFTY), 278–298 (ILFV…TTSE), 374–394 (AGFV…GLMV), 412–432 (LIAV…ALAL), 483–503 (LVMF…AASL), and 525–545 (GIFI…MLVL).

Belongs to the KdpA family. In terms of assembly, the system is composed of three essential subunits: KdpA, KdpB and KdpC.

The protein resides in the cell membrane. Part of the high-affinity ATP-driven potassium transport (or Kdp) system, which catalyzes the hydrolysis of ATP coupled with the electrogenic transport of potassium into the cytoplasm. This subunit binds the extracellular potassium ions and delivers the ions to the membrane domain of KdpB through an intramembrane tunnel. The sequence is that of Potassium-transporting ATPase potassium-binding subunit from Bacillus cereus (strain ATCC 10987 / NRS 248).